Consider the following 2507-residue polypeptide: MAEPIAVVGMAMRLPGNVRNGEEFWQLLVEKRNGLCDVPQDRYNVNGFHDPSGKPSTFRMNKGYFLQDVDIAQFDTSFFSLSKAELERLDPQQRQLLEVAYECMEDAGATSWRGSNTGCYVGVFGDDWQDLNAKETLHKGGYRVTGYDDFVLGNRISYEFDLHGPSMTVKTGWLIFSPTMTLALSDQGVLSPSGICKTFDATADGYGRGEAVNAIYIKRLSQAIEDGDSIRAIIRGTSVNCDGRTQAMLTPSPTAQEALIRRAYEQAGIQDMSRTAMVECHGTGTSVGDPLEATAVANCFGDKGIYITSVKPNVGHSEGAAGLTSLIKAILAIEHRQIPPNIFFESPNPAIPFSKCKLRVPVKTEEWPDARAERVSVNSFGIGGVNAHVIVESLREYQNHDRGLSNGSTTSSSPAGDMTPTDSDGFEDVGSSESSTVDEFANSDGVHSNGHQDVDGSAESKASDAKLESNDTPQSRSTPSNGDQTSHTVGRRNGYSGDDVEFPERPHLLLFSATSEPALKDTVKTYQEFLPTSHISLKDVAYTLALRRDHKPHRAFAIAGNKSSIELSQLETVKTPARIAWVFTGQGAQWPEMGAELIDTNPVFQATIRGLDAFLAGLPSPPPWTIESELRKTAGDSRVQKAEFGHPLSIAVQIGLIDVLKSWGIKPDLVLGHSSGEMAAAYASGSITAKAAMAAATFRGTTSTSGTAEKRGSMAAIGLGAHEMAPYMEPGVVVACENSQCSVTISGDSEQVEKVVQNVKTQREGVLARFLRVEKAFHSHHMLEYGPLYEEHLQPFVSSTSPLIPFYSSVTGKRLSGDGCLGPAYWRRNMESPVLFNTALRSAMTAYEGRLVLIEIGPHPALKGPIGQILRDMGRSADVHVGTLQRDKGCDESLLQLAGKLFQQDVNVDFSHVLLPSGRHVANLPRYPWKRDNSHWAESRMTREWRFREHAPHELLGSRVTEISNEPCWRTKLALEDVSWLSGHEVGGQVVFPGAGYISMVGEAIRQLHEELAYSLKNVSIKAGLVLEHGKTVEIVTSLSPVATDSSDEASWYTFSISSYDGTKWVKHCVGEARASVDKAAQLSVQSPKGYARTVDANEWYNILNRVGFNYTGLFRGLGSITAAPGDNRAAASVPSLSQAGKFAMHPAVMDQCFQLFTVSAYGGLGRNCKNIAVPTFIEEIIVRPTAHDLRVGATIHTLERGSFVGDLVAEQAGELQLSLKGFKASALTRSDDEDESLPLITRFEWRPHAHFVSLADYLHPRTHIPREWPLFEEMMLLCAIDHLETIKLTGETQPHLRKFFSWMQGQVDKYRSGRNLFVANDRGLLELTKAQRLGRIAEIAADGEKSQYPAFCIAIHRLFQTAESIFSGETHPLHVLMKDDVLTEFYAVGDELNYATALRVLGHTNPRLRILEVGAGTGGTTVKVLKALTSSTGERLYSTYTYTDISAGFMASAKERFSEVEGLQYATLDISQDPSEQGYLEGSYDLIIGSNVIHATPNLNVSLSHLRRLLSPGGKLFLQELCPDAKYVNYVMGFLPGWWLGDGDNRPDEPYISADRWAKEMVAAGFAEPEAMVIDGITPYQQSAGIIASPACETSKPLAVSLLSHSMDGAYVAEAKRVLEDLGVAVDVVTFGQPLPSHDVVSLLDLQASTVHDLTEPSFKTLVAQLQALDLDAKVIWATRSAQVACTDPRTAMSLGLTRTARSELSVKLFTVEIDDKTNHLAASKCLVDILMRRHSPQLDAESMDPDWEYAVVDGQILVPRMHWQTMAAAFERTNGDDSRPTEKHLSVKTPGLLHTMGWSQSERAPLEHGQVTVQTRAIGLNFRDVLIALGVLDNSTREIGLEGSGVVTEVGPGVEKLQVGDRVMYMSSGCFTTHITLSQTLCVKLDDGLTFEQGAALPCVYATAAMALVDKANLQPGQTILIHSACGGVGLAAIQIAQMLGGEVYCTVGNEDKVRYLMDNHNIPRHRIFNSRDTSFLRDVMAVTDNRGVDVVLNSLSGELLHASWRCVAEFGTMIEIGKRDFRRRAKLSMEAFEANRTFVGLDLWQVSQVRPEQVARLLERCIKWMQAGSIKPGVIARVWDAEQVQDAFRFMQGGRHIGKIIVKMPQDSSSLESTKERPSPSLRHDRSYLLVGGLGGLGRAIATWMAENGARHLIFLSRSARQGPQLASFVEELAAQGCEVQLVAGSVSCPDDVKRAVDGASKPIAGVMNLSMVLRDISLSDMTFADWTTAVAPKVQGTWNLHEAITSELDFFILCSSYSGIVGQWGQANYAAANTFLDAFVQYRHHKGLAASVIDIGVMGEVGFVSKNKDILGLFQKSGMRILKEQDLLDATNLAIQRSKPSRAQVSDGCFDSPGQILLGLVTSVPIASPNNRVVWKNDIRMSIYHNINGGKDSASSATAELDDITTLLKSAASDPSVLQDEESTVIIATAIASALANFLIKEEGSIKVEDSPEHAGLDSLVAMELRNWIRQRFGVDTTVMTIVQSTSIMSLGDYIRTALVKRS.

The Ketosynthase family 3 (KS3) domain maps to 2 to 393; the sequence is AEPIAVVGMA…GVNAHVIVES (392 aa). Residues 399-501 are disordered; the sequence is NHDRGLSNGS…RNGYSGDDVE (103 aa). Polar residues-rich tracts occupy residues 405-414 and 470-488; these read SNGSTTSSSP and NDTP…TSHT. The interval 581 to 900 is malonyl-CoA:ACP transacylase (MAT) domain; sequence WVFTGQGAQW…DESLLQLAGK (320 aa). The N-terminal hotdog fold stretch occupies residues 953-1080; that stretch reads HELLGSRVTE…GEARASVDKA (128 aa). Residues 953–1232 form a dehydratase (DH) domain region; sequence HELLGSRVTE…FKASALTRSD (280 aa). The PKS/mFAS DH domain occupies 953 to 1234; the sequence is HELLGSRVTE…ASALTRSDDE (282 aa). His984 serves as the catalytic Proton acceptor; for dehydratase activity. The tract at residues 1092 to 1234 is C-terminal hotdog fold; it reads ARTVDANEWY…ASALTRSDDE (143 aa). Asp1151 functions as the Proton donor; for dehydratase activity in the catalytic mechanism. Positions 1402–1570 are methyltransferase (CMet) domain; it reads LGHTNPRLRI…EMVAAGFAEP (169 aa). The interval 1793-2105 is enoyl reductase (ER) (ER) domain; the sequence is GLLHTMGWSQ…GGRHIGKIIV (313 aa). The tract at residues 2130-2303 is ketoreductase (KR) domain; the sequence is SYLLVGGLGG…ASVIDIGVMG (174 aa). The Carrier domain occupies 2425–2503; that stretch reads EESTVIIATA…SLGDYIRTAL (79 aa). Ser2463 bears the O-(pantetheine 4'-phosphoryl)serine mark.

It functions in the pathway secondary metabolite biosynthesis. Functionally, highly reducing polyketide synthase; part of the gene cluster that mediates the biosynthesis of the lipopeptide antibiotics leucinostatins that show extensive biological activities, including antimalarial, antiviral, antibacterial, antifungal, and antitumor activities, as well as phytotoxic. Leucinostatin A contains nine amino acid residues, including the unusual amino acid 4-methyl-L-proline (MePro), 2-amino-6-hydroxy-4-methyl-8-oxodecanoic acid (AHyMeOA), 3-hydroxyleucine (HyLeu), alpha-aminoisobutyric acid (AIB), beta-Ala, a 4-methylhex-2-enoic acid at the N-terminus as well as a N1,N1-dimethylpropane-1,2-diamine (DPD) at the C-terminus. The biosynthesis of leucinostatins is probably initiated with the assembly of 4-methylhex-2-enoic acid by a reducing PKS. Two reducing polyketide synthases, lcsB and lcsC, have been identified in the cluster and it is not clear which is the one that assembles 4-methylhex-2-enoic acid since both contain KS, AT, DH, cMT, ER, KR and ACP domains. The polyketide residue might be transferred to the NRPS lcsA, mediated by two additional enzymes, the acyl-CoA ligase lcsD and the thioesterase lcsE. The linear polyketide carboxylic acid, which is released from PKS, is converted to a CoA thioester by lcsD, and then lcsE hydrolyzes the thiol bond and shuttles the polyketide intermediate to lcsA. The C domain of the first module catalyzed the condensation of 4-methylhex-2-enoic acid and MePro carried by domain A1, followed by successive condensations of nine amino acids to trigger the elongation of the linear peptide. A5 and A6 domains of lcsA are proposed to incorporate leucine, A2 AHyMeOA, and A3 incorporates HyLeu. A4, A7 and A8 incorporate AIB. The AHyMeOA in leucinostatin A activated by the A2 might be produced by the second PKS (lcsB or lcsC) present within the cluster. The MePro is probably produced via leucine cyclization and may originate from a separate pathway, independent of the cluster. Another nonproteinogenic amino acid, beta-Ala, could be produced by an aspartic acid decarboxylase also localized outside of the cluster. Two candidates are VFPBJ_01400 and VFPBJ_10476. The final peptide scaffold may be released by the NAD(P)H-dependent thioester reductase (TE) at the C-terminal region of lcsA. Transamination of the lcsA product by the transaminase lcsP may produce DPD at the C-terminus. Further hydroxylation steps performed alternatively by the cytochrome P450 monooxygenases lcsI, lcsK andr lcsN then yield the non-methylated leucinostatins precursor. It is also possible that leucines can be hydroxylated prior to their incorporation into the peptide. Varying extents of methylation then lead to the formation of leucinostatins A and B. The chain is Highly reducing polyketide synthase lcsB from Purpureocillium lilacinum (Paecilomyces lilacinus).